Consider the following 86-residue polypeptide: Large ribosomal subunit protein eL43 (86 aa).

Positions 38, 41, 57, and 60 each coordinate Zn(2+). A C4-type zinc finger spans residues 38 to 60 (CPFCGSTGTVRRVSVGVWSCRKC).

The protein belongs to the eukaryotic ribosomal protein eL43 family. Putative zinc-binding subfamily. Part of the 50S ribosomal subunit. It depends on Zn(2+) as a cofactor.

Binds to the 23S rRNA. The chain is Large ribosomal subunit protein eL43 from Aeropyrum pernix (strain ATCC 700893 / DSM 11879 / JCM 9820 / NBRC 100138 / K1).